Consider the following 265-residue polypeptide: Phosphonates import ATP-binding protein PhnC (265 aa).

The 245-residue stretch at 3-247 (LRLKQAFLHH…MLDTLYANEQ (245 aa)) folds into the ABC transporter domain. 36–43 (GPSGAGKS) serves as a coordination point for ATP.

This sequence belongs to the ABC transporter superfamily. Phosphonates importer (TC 3.A.1.9.1) family. The complex is composed of two ATP-binding proteins (PhnC), two transmembrane proteins (PhnE) and a solute-binding protein (PhnD).

The protein resides in the cell inner membrane. It carries out the reaction phosphonate(out) + ATP + H2O = phosphonate(in) + ADP + phosphate + H(+). Its function is as follows. Part of the ABC transporter complex PhnCDE involved in phosphonates import. Responsible for energy coupling to the transport system. This Pseudomonas fluorescens (strain Pf0-1) protein is Phosphonates import ATP-binding protein PhnC.